Here is a 556-residue protein sequence, read N- to C-terminus: 2-isopropylmalate synthase (556 aa).

In terms of domain architecture, Pyruvate carboxyltransferase spans 33–307 (PIWLSTDLRD…DPQLDFSDID (275 aa)). The Mg(2+) site is built by D42, H246, H248, and N282. The tract at residues 439–556 (ASAPYALKGH…ALSQAESRAA (118 aa)) is regulatory domain.

This sequence belongs to the alpha-IPM synthase/homocitrate synthase family. LeuA type 2 subfamily. In terms of assembly, homodimer. Mg(2+) serves as cofactor.

The protein resides in the cytoplasm. It catalyses the reaction 3-methyl-2-oxobutanoate + acetyl-CoA + H2O = (2S)-2-isopropylmalate + CoA + H(+). Its pathway is amino-acid biosynthesis; L-leucine biosynthesis; L-leucine from 3-methyl-2-oxobutanoate: step 1/4. In terms of biological role, catalyzes the condensation of the acetyl group of acetyl-CoA with 3-methyl-2-oxobutanoate (2-ketoisovalerate) to form 3-carboxy-3-hydroxy-4-methylpentanoate (2-isopropylmalate). The sequence is that of 2-isopropylmalate synthase from Ectopseudomonas mendocina (strain ymp) (Pseudomonas mendocina).